A 661-amino-acid chain; its full sequence is UvrABC system protein B (661 aa).

Positions 26–413 (KGINEGRKHQ…TPEMVEQIIR (388 aa)) constitute a Helicase ATP-binding domain. 39–46 (GATGTGKT) is a binding site for ATP. A Beta-hairpin motif is present at residues 92–115 (YYDYYQPEAYVPQTDTFIEKDASI). The region spanning 430-596 (QIDDLIGEIQ…TINKKIRDVI (167 aa)) is the Helicase C-terminal domain. A UVR domain is found at 625 to 660 (EKVIAQMESDMKEAAKALDFERAAELRDLLLELKSE).

This sequence belongs to the UvrB family. Forms a heterotetramer with UvrA during the search for lesions. Interacts with UvrC in an incision complex.

Its subcellular location is the cytoplasm. The UvrABC repair system catalyzes the recognition and processing of DNA lesions. A damage recognition complex composed of 2 UvrA and 2 UvrB subunits scans DNA for abnormalities. Upon binding of the UvrA(2)B(2) complex to a putative damaged site, the DNA wraps around one UvrB monomer. DNA wrap is dependent on ATP binding by UvrB and probably causes local melting of the DNA helix, facilitating insertion of UvrB beta-hairpin between the DNA strands. Then UvrB probes one DNA strand for the presence of a lesion. If a lesion is found the UvrA subunits dissociate and the UvrB-DNA preincision complex is formed. This complex is subsequently bound by UvrC and the second UvrB is released. If no lesion is found, the DNA wraps around the other UvrB subunit that will check the other stand for damage. This chain is UvrABC system protein B, found in Bacillus licheniformis (strain ATCC 14580 / DSM 13 / JCM 2505 / CCUG 7422 / NBRC 12200 / NCIMB 9375 / NCTC 10341 / NRRL NRS-1264 / Gibson 46).